The chain runs to 1392 residues: DNA-directed RNA polymerase subunit beta (1392 aa).

A disordered region spans residues 1372–1392; that stretch reads LSSYAEEDPDEGPEALPEAAE.

It belongs to the RNA polymerase beta chain family. The RNAP catalytic core consists of 2 alpha, 1 beta, 1 beta' and 1 omega subunit. When a sigma factor is associated with the core the holoenzyme is formed, which can initiate transcription.

It carries out the reaction RNA(n) + a ribonucleoside 5'-triphosphate = RNA(n+1) + diphosphate. In terms of biological role, DNA-dependent RNA polymerase catalyzes the transcription of DNA into RNA using the four ribonucleoside triphosphates as substrates. This is DNA-directed RNA polymerase subunit beta from Sphingopyxis alaskensis (strain DSM 13593 / LMG 18877 / RB2256) (Sphingomonas alaskensis).